The sequence spans 861 residues: MPILLFLIDTSASMNQRTDLGTSYLDIAKGAVELFLKLRARDPASRGDRYMLVTYDEPPYCIKAGWKENHATFMSELKNLQASGLTTLGQALRSSFDLLNLNRLISGIDNYGQGRNPFFLEPSILITITDGNKLTSTAGVQEELHLPLNSPLPGSELTKEPFRWDQRLFALVLRLPGVASTEPEQLGSVPTDESAITQMCEVTGGRSYCVRTQRMLNQCLESLVQKVQSGVVINFEKTGPDPLPIGEDGLMDSSRPSNSFAAQPWHSCHKLIYVRPNSKTGVPVGHWPIPESFWPDQNLPSLPPRTSHPVVRFSCVDCEPMVIDKLPFDKYELEPSPLTQYILERKSPHTCWQVFVTSSGKYNELGYPFGYLKASTTLTCVNLFVMPYNYPVLLPLLDDLFKVHKLKPNLKWRQAFDSYLKTLPPYYLLTKLESERILASVGKKPPQEIGIKVKNHSGGGMSLTHNKNFRKLLKEITGETALRLTELNTKEFAGFQIGLLNKDLKPQTYRNAYDIPRRGLLDQLTRMRSNLLKTHKFIVGQDEDSLHSVPVAQMGNYQEYLKTLASPLREIDPDQPKRLHTFGNPFKQDKKGMMIDEADEFVAGPQNKVKRPGEPNSPMSSKRRRSMSLLLRKPQTPPTVTNHVGGKGPPSASWFPSYPNLIKPTLVHTDATIIHDGHEEKMENGQITPDGFLSKSAPSELINMTGDLMPPNQVDSLSDDFTSLSKDGLIQKPGSNAFVGGAKNCSLSVDDQKDPVASTLGAMPNTLQITPAMAQGINADIKHQLMKEVRKFGRKYERIFILLEEVQGPLEMKKQFVEFTIKEAARFKRRVLIQYLEKVLEKINSHHLHNNISHINSRSSC.

The 225-residue stretch at 3 to 227 (ILLFLIDTSA…QCLESLVQKV (225 aa)) folds into the VWFA domain. The tract at residues 605–626 (PQNKVKRPGEPNSPMSSKRRRS) is disordered. Ser617 carries the post-translational modification Phosphoserine.

In Homo sapiens (Human), this protein is Integrator complex subunit 6-like (INTS6L).